The chain runs to 226 residues: Staphylococcal superantigen-like 1 (226 aa).

The signal sequence occupies residues 1 to 30; sequence MKFKAIAKASLALGMLATGVITSNVQSVQA.

Belongs to the staphylococcal/streptococcal toxin family. Homodimer.

The protein localises to the secreted. Functionally, mediates virulence by proteolytically cleaving host proteins, including collagens types I and IV as well as human cytokines IL8, IL17A, and IFN-gamma. In Staphylococcus aureus (strain NCTC 8325 / PS 47), this protein is Staphylococcal superantigen-like 1.